The sequence spans 635 residues: ATP-dependent zinc metalloprotease FtsH (635 aa).

Topologically, residues 1 to 4 (MVKN) are cytoplasmic. Residues 5-25 (LVLWVVVAVIMMTAYQSFNSS) form a helical membrane-spanning segment. Topologically, residues 26 to 97 (SVENSTDYTT…VEGTPFERRG (72 aa)) are periplasmic. A helical transmembrane segment spans residues 98–118 (FLSQILISWFPMLFLVGVWVF). Residues 119-635 (FMRQMQGGGG…AVENTDDFNV (517 aa)) are Cytoplasmic-facing. 191-198 (GPPGTGKT) serves as a coordination point for ATP. His-413 lines the Zn(2+) pocket. The active site involves Glu-414. Residues His-417 and Asp-491 each contribute to the Zn(2+) site. The disordered stretch occupies residues 593 to 635 (NREPVTPPSGWGEPKTQQAAYANSTTNDTKPESAVENTDDFNV). Residues 607 to 620 (KTQQAAYANSTTND) show a composition bias toward polar residues.

This sequence in the central section; belongs to the AAA ATPase family. In the C-terminal section; belongs to the peptidase M41 family. In terms of assembly, homohexamer. The cofactor is Zn(2+).

It is found in the cell inner membrane. Functionally, acts as a processive, ATP-dependent zinc metallopeptidase for both cytoplasmic and membrane proteins. Plays a role in the quality control of integral membrane proteins. The chain is ATP-dependent zinc metalloprotease FtsH from Haemophilus influenzae (strain ATCC 51907 / DSM 11121 / KW20 / Rd).